The following is a 650-amino-acid chain: Methionine--tRNA ligase (650 aa).

The 'HIGH' region motif lies at 11–21 (YYVNDIPHIGH). Positions 126, 129, 147, and 150 each coordinate Zn(2+). The 'KMSKS' region motif lies at 301-305 (KMSKS). Lys-304 is a binding site for ATP. Residues 513–535 (EKTEKAGEASPEKNEKEKKDAKE) are disordered. The tRNA-binding domain occupies 549–650 (DFKKVEIKVG…REKIAGSLIS (102 aa)).

The protein belongs to the class-I aminoacyl-tRNA synthetase family. MetG type 2A subfamily. Homodimer. Requires Zn(2+) as cofactor.

It localises to the cytoplasm. The catalysed reaction is tRNA(Met) + L-methionine + ATP = L-methionyl-tRNA(Met) + AMP + diphosphate. Functionally, is required not only for elongation of protein synthesis but also for the initiation of all mRNA translation through initiator tRNA(fMet) aminoacylation. This Helicobacter pylori (strain ATCC 700392 / 26695) (Campylobacter pylori) protein is Methionine--tRNA ligase (metG).